Consider the following 197-residue polypeptide: Probable GTP-binding protein EngB (197 aa).

In terms of domain architecture, EngB-type G spans 22-195 (GYPEIALVGR…WNWIEAQAFG (174 aa)). Residues 30 to 37 (GRSNVGKS), 57 to 61 (GKTQT), 75 to 78 (DVPG), 142 to 145 (TKSD), and 174 to 176 (FSA) each bind GTP. The Mg(2+) site is built by Ser37 and Thr59.

Belongs to the TRAFAC class TrmE-Era-EngA-EngB-Septin-like GTPase superfamily. EngB GTPase family. Mg(2+) serves as cofactor.

In terms of biological role, necessary for normal cell division and for the maintenance of normal septation. This Levilactobacillus brevis (strain ATCC 367 / BCRC 12310 / CIP 105137 / JCM 1170 / LMG 11437 / NCIMB 947 / NCTC 947) (Lactobacillus brevis) protein is Probable GTP-binding protein EngB.